A 446-amino-acid polypeptide reads, in one-letter code: UDP-N-acetylmuramoylalanine--D-glutamate ligase (446 aa).

Position 112–118 (112–118 (GTNGKST)) interacts with ATP.

This sequence belongs to the MurCDEF family.

Its subcellular location is the cytoplasm. It catalyses the reaction UDP-N-acetyl-alpha-D-muramoyl-L-alanine + D-glutamate + ATP = UDP-N-acetyl-alpha-D-muramoyl-L-alanyl-D-glutamate + ADP + phosphate + H(+). It participates in cell wall biogenesis; peptidoglycan biosynthesis. In terms of biological role, cell wall formation. Catalyzes the addition of glutamate to the nucleotide precursor UDP-N-acetylmuramoyl-L-alanine (UMA). The chain is UDP-N-acetylmuramoylalanine--D-glutamate ligase from Baumannia cicadellinicola subsp. Homalodisca coagulata.